We begin with the raw amino-acid sequence, 545 residues long: E3 ubiquitin-protein ligase ipaH9.8 (545 aa).

The interaction with target proteins stretch occupies residues 1-242 (MLPINNNFSL…YHGPRIYFSM (242 aa)). LRR repeat units follow at residues 57 to 77 (NSDE…NLPA), 78 to 99 (QITL…PVTL), 100 to 117 (KKLY…VLPP), 118 to 139 (ALES…PDSL), 140 to 157 (LTMN…SLPQ), 158 to 179 (ALKN…SEGN), 182 to 203 (VVRE…ILNL), and 205 to 228 (NECS…QRLT). The linker stretch occupies residues 243–250 (SDGQQNTL). Residues 251–545 (HRPLADAVTA…SENGSQLHHS (295 aa)) form an E3 ubiquitin-protein ligase catalytic domain region. The NEL domain occupies 253–545 (PLADAVTAWF…SENGSQLHHS (293 aa)). Catalysis depends on Cys337, which acts as the Glycyl thioester intermediate.

Belongs to the LRR-containing bacterial E3 ligase family. As to quaternary structure, also interacts with human and mouse U2AF1 (U2AF35). In terms of processing, ubiquitinated in the presence of host E1 ubiquitin-activating enzyme, E2 ubiquitin-conjugating enzyme and ubiquitin.

It is found in the secreted. The protein localises to the host cytoplasm. It localises to the host nucleus. The enzyme catalyses S-ubiquitinyl-[E2 ubiquitin-conjugating enzyme]-L-cysteine + [acceptor protein]-L-lysine = [E2 ubiquitin-conjugating enzyme]-L-cysteine + N(6)-ubiquitinyl-[acceptor protein]-L-lysine.. Exists in an autoinhibited state in the absence of substrate protein, due to interactions of the leucine-rich repeats with NEL domain. Is activated upon binding to a substrate protein. Effector E3 ubiquitin ligase that interferes with host's ubiquitination pathway and modulates the acute inflammatory responses, thus facilitating bacterial colonization within the host cell. Interacts with IKBKG (NEMO) and TNIP1 (ABIN-1), a ubiquitin-binding adapter protein, which results in TNIP1-dependent 'Lys-27'-linked polyubiquitination of IKBKG. Consequently, polyubiquitinated IKBKG undergoes proteasome-dependent degradation, which perturbs NF-kappa-B activation during bacterial infection. Mediates polyubiquitination of host U2AF1, leading to its proteasomal degradation. Catalyzes 'Lys-48'-linked polyubiquitination and subsequent degradation of a subset of host guanylate-binding proteins (GBP1, GBP2, GBP4 and GBP6), thereby suppressing host cell defense. In contrast, host GBP3 and GBP7 are not ubiquitinated by IpaH9.8. Uses UBE2D2 (UBCH5B) as an E2 ubiquitin-conjugating enzyme. The chain is E3 ubiquitin-protein ligase ipaH9.8 (ipaH9.8) from Shigella dysenteriae serotype 1 (strain Sd197).